Here is a 940-residue protein sequence, read N- to C-terminus: UvrABC system protein A (940 aa).

Residue 31-38 (GLSGSGKS) coordinates ATP. The C4-type zinc finger occupies 253–280 (CPICGYSMRELEPRLFSFNNPAGACPTC). 2 consecutive ABC transporter domains span residues 310–587 (WDRR…PESL) and 607–937 (ANPE…RFLK). Position 640 to 647 (640 to 647 (GVSGSGKS)) interacts with ATP. Residues 740-766 (CEACQGDGVIKVEMHFLPDIYVPCDQC) form a C4-type zinc finger.

Belongs to the ABC transporter superfamily. UvrA family. As to quaternary structure, forms a heterotetramer with UvrB during the search for lesions.

Its subcellular location is the cytoplasm. The UvrABC repair system catalyzes the recognition and processing of DNA lesions. UvrA is an ATPase and a DNA-binding protein. A damage recognition complex composed of 2 UvrA and 2 UvrB subunits scans DNA for abnormalities. When the presence of a lesion has been verified by UvrB, the UvrA molecules dissociate. In Escherichia coli O6:H1 (strain CFT073 / ATCC 700928 / UPEC), this protein is UvrABC system protein A.